The sequence spans 68 residues: MHLCQNGHYYKPHRASAEKVPYLKKKKKNSRNEGKAKKKNEKKKIGTVEFFQQKKKEKKRVLNAVCGL.

The segment at 1–42 (MHLCQNGHYYKPHRASAEKVPYLKKKKKNSRNEGKAKKKNEK) is disordered.

This is an uncharacterized protein from Saccharomyces cerevisiae (strain ATCC 204508 / S288c) (Baker's yeast).